Here is a 366-residue protein sequence, read N- to C-terminus: Chorismate synthase (366 aa).

Residue Arg48 participates in NADP(+) binding. FMN contacts are provided by residues 125-127, Gly283, 298-302, and Arg324; these read RSS and KPTPS.

The protein belongs to the chorismate synthase family. In terms of assembly, homotetramer. The cofactor is FMNH2.

It carries out the reaction 5-O-(1-carboxyvinyl)-3-phosphoshikimate = chorismate + phosphate. The protein operates within metabolic intermediate biosynthesis; chorismate biosynthesis; chorismate from D-erythrose 4-phosphate and phosphoenolpyruvate: step 7/7. Functionally, catalyzes the anti-1,4-elimination of the C-3 phosphate and the C-6 proR hydrogen from 5-enolpyruvylshikimate-3-phosphate (EPSP) to yield chorismate, which is the branch point compound that serves as the starting substrate for the three terminal pathways of aromatic amino acid biosynthesis. This reaction introduces a second double bond into the aromatic ring system. In Lachnospira eligens (strain ATCC 27750 / DSM 3376 / VPI C15-48 / C15-B4) (Eubacterium eligens), this protein is Chorismate synthase.